A 673-amino-acid polypeptide reads, in one-letter code: UvrABC system protein C (673 aa).

The region spanning 16–95 is the GIY-YIG domain; sequence VEPGVYKFRD…IKEFDPRFNV (80 aa). Residues 208–243 form the UVR domain; sequence DKMVRELERRMHAAAEDLDFETAARLRDDVQALRRA. The interval 488 to 526 is disordered; it reads RDEAERDELDGTAAGAPLVDDDETPTSRPGIDPTTGRPR.

Belongs to the UvrC family. Interacts with UvrB in an incision complex.

Its subcellular location is the cytoplasm. The UvrABC repair system catalyzes the recognition and processing of DNA lesions. UvrC both incises the 5' and 3' sides of the lesion. The N-terminal half is responsible for the 3' incision and the C-terminal half is responsible for the 5' incision. The polypeptide is UvrABC system protein C (Nocardia farcinica (strain IFM 10152)).